The sequence spans 143 residues: Large ribosomal subunit protein uL11 (143 aa).

This sequence belongs to the universal ribosomal protein uL11 family. As to quaternary structure, part of the ribosomal stalk of the 50S ribosomal subunit. Interacts with L10 and the large rRNA to form the base of the stalk. L10 forms an elongated spine to which L12 dimers bind in a sequential fashion forming a multimeric L10(L12)X complex. In terms of processing, one or more lysine residues are methylated.

Its function is as follows. Forms part of the ribosomal stalk which helps the ribosome interact with GTP-bound translation factors. The chain is Large ribosomal subunit protein uL11 from Cupriavidus metallidurans (strain ATCC 43123 / DSM 2839 / NBRC 102507 / CH34) (Ralstonia metallidurans).